A 537-amino-acid polypeptide reads, in one-letter code: Fucosyltransferase 6 (537 aa).

Residues 1 to 20 lie on the Cytoplasmic side of the membrane; it reads MYHIFQISSEVFRAFGLKMK. Residues 21 to 41 form a helical; Signal-anchor for type II membrane protein membrane-spanning segment; sequence ILLTLVFSGLLIWSVVLVSFS. Residues 42-537 lie on the Lumenal side of the membrane; that stretch reads NDFNNQLLVA…NDGLKLFDEL (496 aa). N-linked (GlcNAc...) asparagine glycans are attached at residues Asn-54, Asn-231, and Asn-378.

The protein belongs to the glycosyltransferase 37 family. In terms of tissue distribution, expressed in roots and flowers.

It localises to the golgi apparatus. The protein localises to the golgi stack membrane. It participates in protein modification; protein glycosylation. Its function is as follows. May be involved in cell wall biosynthesis. May act as a fucosyltransferase. The chain is Fucosyltransferase 6 (FUT6) from Arabidopsis thaliana (Mouse-ear cress).